The chain runs to 503 residues: Catalase (503 aa).

The interval 1–26 (MAKDDKRLTGLFGHPVSDRENSMTAG) is disordered. Residues H56 and N129 contribute to the active site. Y339 serves as a coordination point for heme.

This sequence belongs to the catalase family. As to quaternary structure, homodimer. Heme is required as a cofactor.

It catalyses the reaction 2 H2O2 = O2 + 2 H2O. Its function is as follows. Decomposes hydrogen peroxide into water and oxygen; serves to protect cells from the toxic effects of hydrogen peroxide. This Staphylococcus haemolyticus (strain JCSC1435) protein is Catalase (katA).